A 617-amino-acid polypeptide reads, in one-letter code: Glutamyl-tRNA(Gln) amidotransferase subunit B, mitochondrial (617 aa).

A mitochondrion-targeting transit peptide spans 1-56; the sequence is MPRIPTSVLGKYLLSGQISRQGCVGARQITRHSALPSAAVSVANSARLLHVSSETV. Residues 53–90 form a disordered region; it reads SETVPPPPAQPVPLRKQLKDEAKKAKKQGKKKSKGDSQ. The span at 76–85 shows a compositional bias: basic residues; the sequence is KAKKQGKKKS.

Belongs to the GatB/GatE family. GatB subfamily. In terms of assembly, subunit of the heterotrimeric GatCAB amidotransferase (AdT) complex, composed of A, B and C subunits.

Its subcellular location is the mitochondrion. It catalyses the reaction L-glutamyl-tRNA(Gln) + L-glutamine + ATP + H2O = L-glutaminyl-tRNA(Gln) + L-glutamate + ADP + phosphate + H(+). Its function is as follows. Allows the formation of correctly charged Gln-tRNA(Gln) through the transamidation of misacylated Glu-tRNA(Gln) in the mitochondria. The reaction takes place in the presence of glutamine and ATP through an activated gamma-phospho-Glu-tRNA(Gln). This is Glutamyl-tRNA(Gln) amidotransferase subunit B, mitochondrial from Fusarium vanettenii (strain ATCC MYA-4622 / CBS 123669 / FGSC 9596 / NRRL 45880 / 77-13-4) (Fusarium solani subsp. pisi).